Here is a 629-residue protein sequence, read N- to C-terminus: tRNA uridine 5-carboxymethylaminomethyl modification enzyme MnmG (629 aa).

Residues 13 to 18 (GGGHAG), valine 125, and serine 180 contribute to the FAD site. 273–287 (GPRYCPSIEDKVMRF) contacts NAD(+). Glutamine 370 lines the FAD pocket.

Belongs to the MnmG family. In terms of assembly, homodimer. Heterotetramer of two MnmE and two MnmG subunits. FAD is required as a cofactor.

It is found in the cytoplasm. Its function is as follows. NAD-binding protein involved in the addition of a carboxymethylaminomethyl (cmnm) group at the wobble position (U34) of certain tRNAs, forming tRNA-cmnm(5)s(2)U34. The polypeptide is tRNA uridine 5-carboxymethylaminomethyl modification enzyme MnmG (Aliivibrio fischeri (strain ATCC 700601 / ES114) (Vibrio fischeri)).